Reading from the N-terminus, the 94-residue chain is MSRTVFCRKYQSDMEGLPRPPFPGPKGQDIFDHVSQQAWKEWLHEQTMLINEKHLNVMDPEAKRFLDEQRDRFLNNENYEKAEGYVPPAHDANK.

Belongs to the Fe(2+)-trafficking protein family.

Could be a mediator in iron transactions between iron acquisition and iron-requiring processes, such as synthesis and/or repair of Fe-S clusters in biosynthetic enzymes. The polypeptide is Probable Fe(2+)-trafficking protein (Alcanivorax borkumensis (strain ATCC 700651 / DSM 11573 / NCIMB 13689 / SK2)).